The primary structure comprises 367 residues: Histidinol-phosphate aminotransferase (367 aa).

The residue at position 221 (Lys-221) is an N6-(pyridoxal phosphate)lysine.

The protein belongs to the class-II pyridoxal-phosphate-dependent aminotransferase family. Histidinol-phosphate aminotransferase subfamily. In terms of assembly, homodimer. Pyridoxal 5'-phosphate is required as a cofactor.

The catalysed reaction is L-histidinol phosphate + 2-oxoglutarate = 3-(imidazol-4-yl)-2-oxopropyl phosphate + L-glutamate. Its pathway is amino-acid biosynthesis; L-histidine biosynthesis; L-histidine from 5-phospho-alpha-D-ribose 1-diphosphate: step 7/9. This chain is Histidinol-phosphate aminotransferase, found in Erythrobacter litoralis (strain HTCC2594).